The primary structure comprises 1227 residues: RNA-binding protein 20 (1227 aa).

Disordered stretches follow at residues 1-58 (MVLA…QAGL) and 289-374 (GSHV…SKQG). Residues 27–42 (PGARASPAPSGPRGMQ) are compositionally biased toward low complexity. Positions 43–56 (QPPPPPQPPPPPQA) are enriched in pro residues. Residues 313–331 (QGTNSQWESPHGFSGQSKP) are compositionally biased toward polar residues. The U1-type zinc finger occupies 409–443 (HLPHICSICDKKVFDLKDWELHVKGKLHAQKCLVF). The residue at position 498 (serine 498) is a Phosphoserine. Residues 518–593 (RVVHICNLPE…EKLLIRMSKR (76 aa)) enclose the RRM domain. Basic and acidic residues predominate over residues 624 to 634 (EADRYGPERPR). 2 disordered regions span residues 624 to 906 (EADR…TNME) and 977 to 1089 (SLKS…ASPP). Residues 628–655 (YGPERPRSRSPVSRSLSPRSHTPSFTSC) are RS. Residues serine 635, serine 637, serine 640, serine 642, serine 660, and serine 679 each carry the phosphoserine modification. Over residues 636-660 (RSPVSRSLSPRSHTPSFTSCSSSHS) the composition is skewed to low complexity. Basic and acidic residues-rich tracts occupy residues 674–709 (DSWEHSPYARREEERDPAPWRDNGDDKRDRMDPWAH) and 716–738 (RQLDKAELDERPEGGRPHREKYP). Over residues 741–752 (GSPNLPHSVSSY) the composition is skewed to polar residues. At serine 742 the chain carries Phosphoserine. Composition is skewed to basic and acidic residues over residues 753–772 (KSREDGYYRKEPKAKSDKYL), 784–807 (RKDEARLRESRHPHPDDSGKEDGL), and 816–856 (EGAK…KEEQ). Residue serine 801 is modified to Phosphoserine. Residues serine 865, serine 876, serine 891, serine 893, serine 977, serine 980, and serine 1013 each carry the phosphoserine modification. The span at 868-888 (RQEKEAEFSDPENTRTKKEQD) shows a compositional bias: basic and acidic residues. Basic and acidic residues predominate over residues 1024–1036 (CYEKEAKGVESSD). Serine 1048, serine 1060, serine 1080, serine 1115, and serine 1120 each carry phosphoserine. Residues 1161-1192 (FYCKLCGLFYTSEETAKMSHCRSAVHYRNLQK) form a Matrin-type zinc finger. Over residues 1201–1215 (GLKETEGADSPRPED) the composition is skewed to basic and acidic residues. The tract at residues 1201-1227 (GLKETEGADSPRPEDSGIVPRFERKKL) is disordered. A Phosphoserine modification is found at serine 1210.

Associates with components of the U1 and U2 U1 small nuclear ribonucleoprotein complexes. In terms of processing, phosphorylation regulates the subcellular localization. Phosphorylation of Ser-635 and Ser-637 in the RS (arginine/serine-rich) region promotes nuclear localization of the protein. In contrast, phosphorylation of the C-terminal disordered region promotes localization to cytoplasmic ribonucleoprotein granules. In terms of tissue distribution, mainly expressed in the heart. Also expressed in skeletal muscle tissues, ovary, small intestine and colon.

The protein resides in the nucleus. Its subcellular location is the cytoplasm. The protein localises to the cytoplasmic ribonucleoprotein granule. Its function is as follows. RNA-binding protein that acts as a regulator of mRNA splicing of a subset of genes encoding key structural proteins involved in cardiac development, such as TTN (Titin), CACNA1C, CAMK2D or PDLIM5/ENH. Acts as a repressor of mRNA splicing: specifically binds the 5'UCUU-3' motif that is predominantly found within intronic sequences of pre-mRNAs, leading to the exclusion of specific exons in target transcripts. RBM20-mediated exon skipping is hormone-dependent and is essential for TTN isoform transition in both cardiac and skeletal muscles. RBM20-mediated exon skipping of TTN provides substrates for the formation of circular RNA (circRNAs) from the TTN transcripts. Together with RBM24, promotes the expression of short isoforms of PDLIM5/ENH in cardiomyocytes. This is RNA-binding protein 20 from Homo sapiens (Human).